The chain runs to 293 residues: Homoserine kinase (293 aa).

An ATP-binding site is contributed by 83–93 (PITRGMGSSSA).

It belongs to the GHMP kinase family. Homoserine kinase subfamily.

It is found in the cytoplasm. It catalyses the reaction L-homoserine + ATP = O-phospho-L-homoserine + ADP + H(+). The protein operates within amino-acid biosynthesis; L-threonine biosynthesis; L-threonine from L-aspartate: step 4/5. Catalyzes the ATP-dependent phosphorylation of L-homoserine to L-homoserine phosphate. This chain is Homoserine kinase, found in Helicobacter pylori (strain ATCC 700392 / 26695) (Campylobacter pylori).